Reading from the N-terminus, the 216-residue chain is Somatotropin (216 aa).

Residues 1–25 (MAPGSWFSPLFITVITLGLQWPQEA) form the signal peptide. His-46 contacts Zn(2+). Residues Cys-78 and Cys-189 are joined by a disulfide bond. Glu-198 provides a ligand contact to Zn(2+). Cys-206 and Cys-214 are oxidised to a cystine.

It belongs to the somatotropin/prolactin family.

Its subcellular location is the secreted. Growth hormone plays an important role in growth control. The chain is Somatotropin (GH) from Anas platyrhynchos (Mallard).